The primary structure comprises 59 residues: MAVPFRKTSKSAKNKRRSHLALSAASLVSCTNCGAMIKPHHVCKECGFYKNKEVKVVEA.

This sequence belongs to the bacterial ribosomal protein bL32 family.

The sequence is that of Large ribosomal subunit protein bL32 from Mycoplasma capricolum subsp. capricolum (strain California kid / ATCC 27343 / NCTC 10154).